We begin with the raw amino-acid sequence, 319 residues long: Acetyl-coenzyme A carboxylase carboxyl transferase subunit alpha (319 aa).

Residues 32-293 enclose the CoA carboxyltransferase C-terminal domain; it reads NVDAEVRALR…KAVLLNELDA (262 aa).

Belongs to the AccA family. As to quaternary structure, acetyl-CoA carboxylase is a heterohexamer composed of biotin carboxyl carrier protein (AccB), biotin carboxylase (AccC) and two subunits each of ACCase subunit alpha (AccA) and ACCase subunit beta (AccD).

The protein resides in the cytoplasm. It catalyses the reaction N(6)-carboxybiotinyl-L-lysyl-[protein] + acetyl-CoA = N(6)-biotinyl-L-lysyl-[protein] + malonyl-CoA. It participates in lipid metabolism; malonyl-CoA biosynthesis; malonyl-CoA from acetyl-CoA: step 1/1. In terms of biological role, component of the acetyl coenzyme A carboxylase (ACC) complex. First, biotin carboxylase catalyzes the carboxylation of biotin on its carrier protein (BCCP) and then the CO(2) group is transferred by the carboxyltransferase to acetyl-CoA to form malonyl-CoA. This chain is Acetyl-coenzyme A carboxylase carboxyl transferase subunit alpha, found in Xanthomonas campestris pv. campestris (strain B100).